Consider the following 384-residue polypeptide: Putative pectate lyase 2 (384 aa).

Residues 1–23 (MASLFLTIISLLFAAFSSSVVEA) form the signal peptide. Ca(2+)-binding residues include D182, D206, and D210. R262 is a catalytic residue.

It belongs to the polysaccharide lyase 1 family. It depends on Ca(2+) as a cofactor.

The enzyme catalyses Eliminative cleavage of (1-&gt;4)-alpha-D-galacturonan to give oligosaccharides with 4-deoxy-alpha-D-galact-4-enuronosyl groups at their non-reducing ends.. It functions in the pathway glycan metabolism; pectin degradation; 2-dehydro-3-deoxy-D-gluconate from pectin: step 2/5. In Arabidopsis thaliana (Mouse-ear cress), this protein is Putative pectate lyase 2.